A 371-amino-acid chain; its full sequence is Ferrochelatase (371 aa).

His218 and Glu299 together coordinate Fe cation.

Belongs to the ferrochelatase family.

It is found in the cytoplasm. It carries out the reaction heme b + 2 H(+) = protoporphyrin IX + Fe(2+). It participates in porphyrin-containing compound metabolism; protoheme biosynthesis; protoheme from protoporphyrin-IX: step 1/1. In terms of biological role, catalyzes the ferrous insertion into protoporphyrin IX. The polypeptide is Ferrochelatase (Cupriavidus pinatubonensis (strain JMP 134 / LMG 1197) (Cupriavidus necator (strain JMP 134))).